We begin with the raw amino-acid sequence, 191 residues long: Protein GrpE (191 aa).

The protein belongs to the GrpE family. In terms of assembly, homodimer.

It localises to the cytoplasm. Its function is as follows. Participates actively in the response to hyperosmotic and heat shock by preventing the aggregation of stress-denatured proteins, in association with DnaK and GrpE. It is the nucleotide exchange factor for DnaK and may function as a thermosensor. Unfolded proteins bind initially to DnaJ; upon interaction with the DnaJ-bound protein, DnaK hydrolyzes its bound ATP, resulting in the formation of a stable complex. GrpE releases ADP from DnaK; ATP binding to DnaK triggers the release of the substrate protein, thus completing the reaction cycle. Several rounds of ATP-dependent interactions between DnaJ, DnaK and GrpE are required for fully efficient folding. The polypeptide is Protein GrpE (Listeria monocytogenes serotype 4b (strain CLIP80459)).